The primary structure comprises 341 residues: Anthranilate phosphoribosyltransferase (341 aa).

5-phospho-alpha-D-ribose 1-diphosphate contacts are provided by residues glycine 79, 82–83 (GD), threonine 87, 89–92 (NIST), 107–115 (KHGNRAVSS), and serine 119. Glycine 79 serves as a coordination point for anthranilate. Serine 91 is a binding site for Mg(2+). Asparagine 110 provides a ligand contact to anthranilate. Arginine 165 lines the anthranilate pocket. Residues aspartate 224 and glutamate 225 each coordinate Mg(2+).

The protein belongs to the anthranilate phosphoribosyltransferase family. Homodimer. Requires Mg(2+) as cofactor.

The enzyme catalyses N-(5-phospho-beta-D-ribosyl)anthranilate + diphosphate = 5-phospho-alpha-D-ribose 1-diphosphate + anthranilate. The protein operates within amino-acid biosynthesis; L-tryptophan biosynthesis; L-tryptophan from chorismate: step 2/5. Its function is as follows. Catalyzes the transfer of the phosphoribosyl group of 5-phosphorylribose-1-pyrophosphate (PRPP) to anthranilate to yield N-(5'-phosphoribosyl)-anthranilate (PRA). The polypeptide is Anthranilate phosphoribosyltransferase (Bacillus mycoides (strain KBAB4) (Bacillus weihenstephanensis)).